An 85-amino-acid polypeptide reads, in one-letter code: Large ribosomal subunit protein eL43 (85 aa).

Zn(2+) contacts are provided by Cys-32, Cys-35, Cys-50, and Cys-53. The segment at 32–53 (CTFCGKTKMKRRAVGIWHCGSC) adopts a C4-type zinc-finger fold.

This sequence belongs to the eukaryotic ribosomal protein eL43 family. As to quaternary structure, component of the large ribosomal subunit.

Its subcellular location is the cytoplasm. In terms of biological role, component of the large ribosomal subunit. The ribosome is a large ribonucleoprotein complex responsible for the synthesis of proteins in the cell. In Myxine glutinosa (Atlantic hagfish), this protein is Large ribosomal subunit protein eL43 (rpl37a).